Consider the following 458-residue polypeptide: Argininosuccinate lyase (458 aa).

This sequence belongs to the lyase 1 family. Argininosuccinate lyase subfamily.

The protein resides in the cytoplasm. It carries out the reaction 2-(N(omega)-L-arginino)succinate = fumarate + L-arginine. Its pathway is amino-acid biosynthesis; L-arginine biosynthesis; L-arginine from L-ornithine and carbamoyl phosphate: step 3/3. The chain is Argininosuccinate lyase from Salmonella typhi.